A 372-amino-acid chain; its full sequence is Putative glutamate--cysteine ligase 2 (372 aa).

The protein belongs to the glutamate--cysteine ligase type 2 family. YbdK subfamily.

The enzyme catalyses L-cysteine + L-glutamate + ATP = gamma-L-glutamyl-L-cysteine + ADP + phosphate + H(+). Its function is as follows. ATP-dependent carboxylate-amine ligase which exhibits weak glutamate--cysteine ligase activity. The polypeptide is Putative glutamate--cysteine ligase 2 (Cupriavidus metallidurans (strain ATCC 43123 / DSM 2839 / NBRC 102507 / CH34) (Ralstonia metallidurans)).